Consider the following 411-residue polypeptide: 2,3-bisphosphoglycerate-independent phosphoglycerate mutase (411 aa).

It belongs to the BPG-independent phosphoglycerate mutase family. A-PGAM subfamily.

It catalyses the reaction (2R)-2-phosphoglycerate = (2R)-3-phosphoglycerate. Its pathway is carbohydrate degradation; glycolysis; pyruvate from D-glyceraldehyde 3-phosphate: step 3/5. Functionally, catalyzes the interconversion of 2-phosphoglycerate and 3-phosphoglycerate. The polypeptide is 2,3-bisphosphoglycerate-independent phosphoglycerate mutase (Pyrobaculum arsenaticum (strain DSM 13514 / JCM 11321 / PZ6)).